The sequence spans 532 residues: Ankyrin repeat-containing protein At2g01680 (532 aa).

ANK repeat units follow at residues 9-38, 58-89, 93-122, 127-156, 161-190, 195-224, and 229-259; these read LTHQAFFSSVRSGDLSQLQQLVDNLTGDEL, AGETAVYISAAENLEDIFRYLIRFSSLETVKI, SDMNAFHVAAKRGHLGIVKELLRLWPELCR, SNTSPLYAAAVQDHLEIVNAMLDVDPSCAM, NGKTSLHTAGRYGLLRIVKALIEKDAAIVG, KGQTALHMAVKGRSLEVVEEILQADYTILN, and KGNTALHIATRKARPQITSLLLTFTAIEVNA. Transmembrane regions (helical) follow at residues 354-374, 396-416, 436-456, and 467-487; these read ITVVAVLFASIAFLAIFNLPG, VFCLLNATSLFISLAVVVVQI, LMWAACACTFGAFLAIAFAVV, and ITLLGAPILVGTLASMCYFVF.

The protein resides in the membrane. This chain is Ankyrin repeat-containing protein At2g01680, found in Arabidopsis thaliana (Mouse-ear cress).